A 365-amino-acid polypeptide reads, in one-letter code: Testis-specific serine/threonine-protein kinase 1 (365 aa).

Positions 12-272 (YIMGINLGEG…IDEILNHCWV (261 aa)) constitute a Protein kinase domain. Residues 18–26 (LGEGSYAKV) and Lys-41 contribute to the ATP site. Asp-136 (proton acceptor) is an active-site residue. Thr-174 bears the Phosphothreonine mark. The interval 282–365 (GAINKEGESS…HPQQPSETHT (84 aa)) is disordered. The segment covering 303 to 330 (GADKKSATKLEPREEARSEARSESKPQE) has biased composition (basic and acidic residues). The span at 331–347 (DTLQVVRQSENVGLSSE) shows a compositional bias: polar residues.

The protein belongs to the protein kinase superfamily. CAMK Ser/Thr protein kinase family. In terms of assembly, interacts with TSSK2. Interacts with HSP90; this interaction stabilizes TSSK1. Requires Mg(2+) as cofactor. Post-translationally, autophosphorylated. Ubiquitinated; HSP90 activity negatively regulates ubiquitination and degradation. Testis-specific. Expressed only in postmeiotic spermatids at the final stages of cytodifferentiation in the seminiferous tubules (at protein level). Not detected in released sperms in the lumen of the seminiferous tubules and the epididymis.

It localises to the cytoplasm. Its subcellular location is the cytoplasmic vesicle. The protein localises to the secretory vesicle. It is found in the acrosome. The protein resides in the cell projection. It localises to the cilium. Its subcellular location is the flagellum. It carries out the reaction L-seryl-[protein] + ATP = O-phospho-L-seryl-[protein] + ADP + H(+). The enzyme catalyses L-threonyl-[protein] + ATP = O-phospho-L-threonyl-[protein] + ADP + H(+). Its activity is regulated as follows. Activated by phosphorylation on Thr-174, potentially by autophosphorylation. Testis-specific serine/threonine-protein kinase required during spermatid development. Phosphorylates 'Ser-281' of TSKS. Involved in the late stages of spermatogenesis, during the reconstruction of the cytoplasm. During spermatogenesis, required for the transformation of a ring-shaped structure around the base of the flagellum originating from the chromatoid body. This is Testis-specific serine/threonine-protein kinase 1 (Tssk1b) from Mus musculus (Mouse).